Here is a 316-residue protein sequence, read N- to C-terminus: 4-hydroxy-3-methylbut-2-enyl diphosphate reductase (316 aa).

C12 serves as a coordination point for [4Fe-4S] cluster. H41 and H74 together coordinate (2E)-4-hydroxy-3-methylbut-2-enyl diphosphate. Dimethylallyl diphosphate-binding residues include H41 and H74. Isopentenyl diphosphate-binding residues include H41 and H74. C96 contacts [4Fe-4S] cluster. Residue H124 participates in (2E)-4-hydroxy-3-methylbut-2-enyl diphosphate binding. Position 124 (H124) interacts with dimethylallyl diphosphate. H124 contacts isopentenyl diphosphate. The Proton donor role is filled by E126. T167 is a binding site for (2E)-4-hydroxy-3-methylbut-2-enyl diphosphate. C197 provides a ligand contact to [4Fe-4S] cluster. The (2E)-4-hydroxy-3-methylbut-2-enyl diphosphate site is built by S225, S226, N227, and S269. S225, S226, N227, and S269 together coordinate dimethylallyl diphosphate. The isopentenyl diphosphate site is built by S225, S226, N227, and S269.

The protein belongs to the IspH family. Homodimer. Requires [4Fe-4S] cluster as cofactor.

The enzyme catalyses isopentenyl diphosphate + 2 oxidized [2Fe-2S]-[ferredoxin] + H2O = (2E)-4-hydroxy-3-methylbut-2-enyl diphosphate + 2 reduced [2Fe-2S]-[ferredoxin] + 2 H(+). It catalyses the reaction dimethylallyl diphosphate + 2 oxidized [2Fe-2S]-[ferredoxin] + H2O = (2E)-4-hydroxy-3-methylbut-2-enyl diphosphate + 2 reduced [2Fe-2S]-[ferredoxin] + 2 H(+). It functions in the pathway isoprenoid biosynthesis; dimethylallyl diphosphate biosynthesis; dimethylallyl diphosphate from (2E)-4-hydroxy-3-methylbutenyl diphosphate: step 1/1. Its pathway is isoprenoid biosynthesis; isopentenyl diphosphate biosynthesis via DXP pathway; isopentenyl diphosphate from 1-deoxy-D-xylulose 5-phosphate: step 6/6. Its function is as follows. Catalyzes the conversion of 1-hydroxy-2-methyl-2-(E)-butenyl 4-diphosphate (HMBPP) into a mixture of isopentenyl diphosphate (IPP) and dimethylallyl diphosphate (DMAPP). Acts in the terminal step of the DOXP/MEP pathway for isoprenoid precursor biosynthesis. This is 4-hydroxy-3-methylbut-2-enyl diphosphate reductase from Sodalis glossinidius (strain morsitans).